The sequence spans 472 residues: tRNA-2-methylthio-N(6)-dimethylallyladenosine synthase (472 aa).

The interval 1–24 is disordered; the sequence is MTGTPDVFPPATPGGAPLVALPAG. The MTTase N-terminal domain maps to 33-150; the sequence is GKLYIKTHGC…LPELIRARRE (118 aa). Residues Cys-42, Cys-79, Cys-113, Cys-187, Cys-191, and Cys-194 each contribute to the [4Fe-4S] cluster site. One can recognise a Radical SAM core domain in the interval 173 to 407; sequence RAEGASAFVS…RINAHAAGIS (235 aa). The 64-residue stretch at 408–471 folds into the TRAM domain; that stretch reads EKMVGTVQTV…TNSLRARVVA (64 aa).

Belongs to the methylthiotransferase family. MiaB subfamily. In terms of assembly, monomer. [4Fe-4S] cluster serves as cofactor.

It is found in the cytoplasm. The catalysed reaction is N(6)-dimethylallyladenosine(37) in tRNA + (sulfur carrier)-SH + AH2 + 2 S-adenosyl-L-methionine = 2-methylsulfanyl-N(6)-dimethylallyladenosine(37) in tRNA + (sulfur carrier)-H + 5'-deoxyadenosine + L-methionine + A + S-adenosyl-L-homocysteine + 2 H(+). In terms of biological role, catalyzes the methylthiolation of N6-(dimethylallyl)adenosine (i(6)A), leading to the formation of 2-methylthio-N6-(dimethylallyl)adenosine (ms(2)i(6)A) at position 37 in tRNAs that read codons beginning with uridine. This chain is tRNA-2-methylthio-N(6)-dimethylallyladenosine synthase, found in Stenotrophomonas maltophilia (strain K279a).